Reading from the N-terminus, the 341-residue chain is Ketol-acid reductoisomerase (NADP(+)) (341 aa).

The 181-residue stretch at 1–181 (MARVYREGDI…GCARAGVLET (181 aa)) folds into the KARI N-terminal Rossmann domain. Residues 24–27 (FGSQ), serine 50, serine 52, and 82–85 (DERQ) each bind NADP(+). The active site involves histidine 107. Glycine 133 lines the NADP(+) pocket. One can recognise a KARI C-terminal knotted domain in the interval 182–327 (TFAEETETDL…AELRALAAEG (146 aa)). The Mg(2+) site is built by aspartate 190, glutamate 194, glutamate 226, and glutamate 230. Residue serine 251 participates in substrate binding.

It belongs to the ketol-acid reductoisomerase family. Mg(2+) serves as cofactor.

It catalyses the reaction (2R)-2,3-dihydroxy-3-methylbutanoate + NADP(+) = (2S)-2-acetolactate + NADPH + H(+). The catalysed reaction is (2R,3R)-2,3-dihydroxy-3-methylpentanoate + NADP(+) = (S)-2-ethyl-2-hydroxy-3-oxobutanoate + NADPH + H(+). Its pathway is amino-acid biosynthesis; L-isoleucine biosynthesis; L-isoleucine from 2-oxobutanoate: step 2/4. The protein operates within amino-acid biosynthesis; L-valine biosynthesis; L-valine from pyruvate: step 2/4. Functionally, involved in the biosynthesis of branched-chain amino acids (BCAA). Catalyzes an alkyl-migration followed by a ketol-acid reduction of (S)-2-acetolactate (S2AL) to yield (R)-2,3-dihydroxy-isovalerate. In the isomerase reaction, S2AL is rearranged via a Mg-dependent methyl migration to produce 3-hydroxy-3-methyl-2-ketobutyrate (HMKB). In the reductase reaction, this 2-ketoacid undergoes a metal-dependent reduction by NADPH to yield (R)-2,3-dihydroxy-isovalerate. The protein is Ketol-acid reductoisomerase (NADP(+)) of Rubrobacter xylanophilus (strain DSM 9941 / JCM 11954 / NBRC 16129 / PRD-1).